Here is a 316-residue protein sequence, read N- to C-terminus: Ornithine carbamoyltransferase (316 aa).

Carbamoyl phosphate is bound by residues 57–60 (STRT), Q84, R108, and 135–138 (HPCQ). Residues N166, D230, and 234–235 (SM) contribute to the L-ornithine site. Residues 269 to 270 (CL) and R297 contribute to the carbamoyl phosphate site.

Belongs to the aspartate/ornithine carbamoyltransferase superfamily. OTCase family.

It is found in the cytoplasm. The enzyme catalyses carbamoyl phosphate + L-ornithine = L-citrulline + phosphate + H(+). Its pathway is amino-acid degradation; L-arginine degradation via ADI pathway; carbamoyl phosphate from L-arginine: step 2/2. Its function is as follows. Reversibly catalyzes the transfer of the carbamoyl group from carbamoyl phosphate (CP) to the N(epsilon) atom of ornithine (ORN) to produce L-citrulline. This Bacillus cereus (strain 03BB102) protein is Ornithine carbamoyltransferase.